The chain runs to 104 residues: ATP-dependent Clp protease adapter protein ClpS (104 aa).

The protein belongs to the ClpS family. In terms of assembly, binds to the N-terminal domain of the chaperone ClpA.

Its function is as follows. Involved in the modulation of the specificity of the ClpAP-mediated ATP-dependent protein degradation. The sequence is that of ATP-dependent Clp protease adapter protein ClpS from Nitratidesulfovibrio vulgaris (strain ATCC 29579 / DSM 644 / CCUG 34227 / NCIMB 8303 / VKM B-1760 / Hildenborough) (Desulfovibrio vulgaris).